We begin with the raw amino-acid sequence, 578 residues long: Probable ATP-dependent RNA helicase DDX55 homolog (578 aa).

A Q motif motif is present at residues 7–37 (PVALKTFREKLGPELLEVFDKSYKSFTDVQV). The 179-residue stretch at 40–218 (GTHLLNLSDV…VFGLRNAKQV (179 aa)) folds into the Helicase ATP-binding domain. 53 to 60 (SPTGSGKT) lines the ATP pocket. The DEAD box motif lies at 166 to 169 (DEAD). The Helicase C-terminal domain occupies 231–393 (TLKNYYVECR…EIKVPTNNSR (163 aa)). The tract at residues 507–557 (AAKDKKRREKEARKLKKMGGRFRNGGGTGRKAEEKKALKRKAEEEDDAQND) is disordered. Basic residues predominate over residues 510 to 526 (DKKRREKEARKLKKMGG). The span at 536–549 (RKAEEKKALKRKAE) shows a compositional bias: basic and acidic residues.

This sequence belongs to the DEAD box helicase family. DDX55/SPB4 subfamily.

It catalyses the reaction ATP + H2O = ADP + phosphate + H(+). Probable ATP-binding RNA helicase. The chain is Probable ATP-dependent RNA helicase DDX55 homolog from Caenorhabditis elegans.